The following is a 311-amino-acid chain: MKALWAVLLVTLLTGCLAEGEPEVTDQLEWQSNQPWEQALNRFWDYLRWVQTLSDQVQEELQSSQVTQELTALMEDTMTEVKAYKKELEEQLGPVAEETRARLGKEVQAAQARLGADMEDLRNRLGQYRNEVHTMLGQSTEEIRARLSTHLRKMRKRLMRDAEDLQKRLAVYKAGAREGAERGVSAIRERLGPLVEQGRQRTANLGAGAAQPLRDRAQAFGDRIRGRLEEVGNQARDRLEEVREHMEEVRSKMEEQTQQIRLQAEIFQARLKGWFEPIVEDMHRQWANLMEKIQASVATNPIITPVAQENQ.

The signal sequence occupies residues 1–18 (MKALWAVLLVTLLTGCLA). Tandem repeats lie at residues 72–93 (ALME…EQLG), 94–115 (PVAE…ARLG), 116–137 (ADME…TMLG), 138–159 (QSTE…KRLM), 160–181 (RDAE…EGAE), 182–203 (RGVS…QRTA), 204–225 (NLGA…DRIR), and 226–247 (GRLE…EHME). The segment at 72–247 (ALMEDTMTEV…RLEEVREHME (176 aa)) is 8 X 22 AA approximate tandem repeats. Methionine 135 bears the Methionine sulfoxide mark. Phosphoserine is present on serine 139. Positions 150–160 (HLRKMRKRLMR) are LDL and other lipoprotein receptors binding. A heparin-binding site is contributed by 154–157 (MRKR). The tract at residues 202 to 282 (TANLGAGAAQ…GWFEPIVEDM (81 aa)) is lipid-binding and lipoprotein association. Heparin is bound at residue 221 to 228 (GDRIRGRL). The homooligomerization stretch occupies residues 258–311 (QQIRLQAEIFQARLKGWFEPIVEDMHRQWANLMEKIQASVATNPIITPVAQENQ). The tract at residues 270 to 282 (RLKGWFEPIVEDM) is specificity for association with VLDL.

This sequence belongs to the apolipoprotein A1/A4/E family. Homotetramer. May interact with ABCA1; functionally associated with ABCA1 in the biogenesis of HDLs. May interact with APP/A4 amyloid-beta peptide; the interaction is extremely stable in vitro but its physiological significance is unclear. May interact with MAPT. May interact with MAP2. In the cerebrospinal fluid, interacts with secreted SORL1. Interacts with PMEL; this allows the loading of PMEL luminal fragment on ILVs to induce fibril nucleation. APOE exists as multiple glycosylated and sialylated glycoforms within cells and in plasma. The extent of glycosylation and sialylation are tissue and context specific. In terms of processing, glycated in plasma VLDL. Post-translationally, phosphorylated by FAM20C in the extracellular medium.

It localises to the secreted. The protein resides in the extracellular space. Its subcellular location is the extracellular matrix. The protein localises to the extracellular vesicle. It is found in the endosome. It localises to the multivesicular body. Functionally, APOE is an apolipoprotein, a protein associating with lipid particles, that mainly functions in lipoprotein-mediated lipid transport between organs via the plasma and interstitial fluids. APOE is a core component of plasma lipoproteins and is involved in their production, conversion and clearance. Apolipoproteins are amphipathic molecules that interact both with lipids of the lipoprotein particle core and the aqueous environment of the plasma. As such, APOE associates with chylomicrons, chylomicron remnants, very low density lipoproteins (VLDL) and intermediate density lipoproteins (IDL) but shows a preferential binding to high-density lipoproteins (HDL). It also binds a wide range of cellular receptors including the LDL receptor/LDLR and the very low-density lipoprotein receptor/VLDLR that mediate the cellular uptake of the APOE-containing lipoprotein particles. Finally, APOE also has a heparin-binding activity and binds heparan-sulfate proteoglycans on the surface of cells, a property that supports the capture and the receptor-mediated uptake of APOE-containing lipoproteins by cells. This Mus musculus (Mouse) protein is Apolipoprotein E (Apoe).